A 507-amino-acid chain; its full sequence is Subtilisin-like protease 1 (507 aa).

The signal sequence occupies residues 1-19 (MGVFRFISISLAAVSAANA). Positions 20 to 116 (AQILSMPHAQ…VEPDTIISVN (97 aa)) are excised as a propeptide. The 80-residue stretch at 34-113 (SYIVMMKDDT…VMFVEPDTII (80 aa)) folds into the Inhibitor I9 domain. Residues 126 to 400 (SWGLARISNS…NVLISNGGAK (275 aa)) form the Peptidase S8 domain. Residues Asp-158 and His-190 each act as charge relay system in the active site. Residues 175 to 198 (GSNQVNDGDDRDGSGHGTHTSGTM) form a disordered region. N-linked (GlcNAc...) asparagine glycosylation is present at Asn-251. A compositionally biased stretch (polar residues) spans 282 to 294 (NENQDARSSSPAS). The disordered stretch occupies residues 282 to 312 (NENQDARSSSPASEPSVCTVGSSAEDDSRSS). The Charge relay system role is filled by Ser-345. Residues 378–394 (SSSITDVGPGTPTNVLI) show a composition bias toward polar residues. Positions 378–486 (SSSITDVGPG…YPGGDNFDFD (109 aa)) are disordered. Pro residues-rich tracts occupy residues 405-428 (KPAP…PSQP) and 438-449 (EPFPGEPFPGEP). Low complexity predominate over residues 450–461 (FPGESSPGESAP). Positions 462-476 (APAPMPPSPQHPHTP) are enriched in pro residues.

It belongs to the peptidase S8 family.

It localises to the secreted. Secreted subtilisin-like serine protease with keratinolytic activity that contributes to pathogenicity. This Trichophyton tonsurans (Scalp ringworm fungus) protein is Subtilisin-like protease 1 (SUB1).